Reading from the N-terminus, the 361-residue chain is Phospho-N-acetylmuramoyl-pentapeptide-transferase (361 aa).

A run of 10 helical transmembrane segments spans residues 27 to 47 (GAIV…ISTL), 72 to 92 (TPTM…LLWA), 94 to 114 (LSNL…LIGF), 133 to 153 (ARLA…INAG), 169 to 189 (LLLD…VAAG), 200 to 220 (GLAI…SYLS), 237 to 257 (VGEL…FLWF), 264 to 284 (IFMG…IAVA), 289 to 309 (IVLA…IVQV), and 338 to 358 (QVVI…LATL).

This sequence belongs to the glycosyltransferase 4 family. MraY subfamily. Mg(2+) serves as cofactor.

It is found in the cell inner membrane. The enzyme catalyses UDP-N-acetyl-alpha-D-muramoyl-L-alanyl-gamma-D-glutamyl-meso-2,6-diaminopimeloyl-D-alanyl-D-alanine + di-trans,octa-cis-undecaprenyl phosphate = di-trans,octa-cis-undecaprenyl diphospho-N-acetyl-alpha-D-muramoyl-L-alanyl-D-glutamyl-meso-2,6-diaminopimeloyl-D-alanyl-D-alanine + UMP. It participates in cell wall biogenesis; peptidoglycan biosynthesis. Functionally, catalyzes the initial step of the lipid cycle reactions in the biosynthesis of the cell wall peptidoglycan: transfers peptidoglycan precursor phospho-MurNAc-pentapeptide from UDP-MurNAc-pentapeptide onto the lipid carrier undecaprenyl phosphate, yielding undecaprenyl-pyrophosphoryl-MurNAc-pentapeptide, known as lipid I. In Azorhizobium caulinodans (strain ATCC 43989 / DSM 5975 / JCM 20966 / LMG 6465 / NBRC 14845 / NCIMB 13405 / ORS 571), this protein is Phospho-N-acetylmuramoyl-pentapeptide-transferase.